Reading from the N-terminus, the 268-residue chain is Leucyl/phenylalanyl-tRNA--protein transferase (268 aa).

This sequence belongs to the L/F-transferase family.

The protein localises to the cytoplasm. The catalysed reaction is N-terminal L-lysyl-[protein] + L-leucyl-tRNA(Leu) = N-terminal L-leucyl-L-lysyl-[protein] + tRNA(Leu) + H(+). The enzyme catalyses N-terminal L-arginyl-[protein] + L-leucyl-tRNA(Leu) = N-terminal L-leucyl-L-arginyl-[protein] + tRNA(Leu) + H(+). It catalyses the reaction L-phenylalanyl-tRNA(Phe) + an N-terminal L-alpha-aminoacyl-[protein] = an N-terminal L-phenylalanyl-L-alpha-aminoacyl-[protein] + tRNA(Phe). Its function is as follows. Functions in the N-end rule pathway of protein degradation where it conjugates Leu, Phe and, less efficiently, Met from aminoacyl-tRNAs to the N-termini of proteins containing an N-terminal arginine or lysine. The sequence is that of Leucyl/phenylalanyl-tRNA--protein transferase from Psychrobacter arcticus (strain DSM 17307 / VKM B-2377 / 273-4).